Consider the following 78-residue polypeptide: Large ribosomal subunit protein bL28 (78 aa).

It belongs to the bacterial ribosomal protein bL28 family.

This chain is Large ribosomal subunit protein bL28, found in Leifsonia xyli subsp. xyli (strain CTCB07).